Reading from the N-terminus, the 220-residue chain is MKAQTKSKKVNKAWLHDHVNDTYVKLAQKEGYRARAAYKLKEIDEQLGLIKPGHVVVDLGSSPGAWSQYVRRRLSPDGAAVGQLNGVIIALDILPMEPIEGVTFLQGDFREEEVLAGLQEAVQARPVDVVVSDMAPNLSGVESVDAVRIAHLIELAVDFAVHHLKPEGALVVKLFHGSGYSQLVQLFKDTFRVVKPMKPKASRDKSSETFLVGMGLKRQG.

Residues glycine 64, tryptophan 66, aspartate 92, aspartate 108, and aspartate 133 each contribute to the S-adenosyl-L-methionine site. Lysine 173 serves as the catalytic Proton acceptor.

The protein belongs to the class I-like SAM-binding methyltransferase superfamily. RNA methyltransferase RlmE family.

The protein localises to the cytoplasm. It catalyses the reaction uridine(2552) in 23S rRNA + S-adenosyl-L-methionine = 2'-O-methyluridine(2552) in 23S rRNA + S-adenosyl-L-homocysteine + H(+). Specifically methylates the uridine in position 2552 of 23S rRNA at the 2'-O position of the ribose in the fully assembled 50S ribosomal subunit. The protein is Ribosomal RNA large subunit methyltransferase E of Acidovorax sp. (strain JS42).